Consider the following 299-residue polypeptide: NAD kinase (299 aa).

Catalysis depends on aspartate 78, which acts as the Proton acceptor. NAD(+) contacts are provided by residues 78-79 (DG), 151-152 (ND), lysine 162, arginine 179, aspartate 181, 192-197 (TAYALS), and glutamine 252.

Belongs to the NAD kinase family. The cofactor is a divalent metal cation.

Its subcellular location is the cytoplasm. The enzyme catalyses NAD(+) + ATP = ADP + NADP(+) + H(+). Its function is as follows. Involved in the regulation of the intracellular balance of NAD and NADP, and is a key enzyme in the biosynthesis of NADP. Catalyzes specifically the phosphorylation on 2'-hydroxyl of the adenosine moiety of NAD to yield NADP. In Coxiella burnetii (strain CbuG_Q212) (Coxiella burnetii (strain Q212)), this protein is NAD kinase.